Reading from the N-terminus, the 358-residue chain is uncharacterized protein (358 aa).

Zn(2+) is bound by residues Cys-39, His-61, Cys-92, Cys-95, Cys-98, Cys-106, and Asp-157.

This sequence belongs to the zinc-containing alcohol dehydrogenase family. Requires Zn(2+) as cofactor.

This is an uncharacterized protein from Escherichia coli (strain K12).